A 557-amino-acid polypeptide reads, in one-letter code: Formate--tetrahydrofolate ligase (557 aa).

An ATP-binding site is contributed by 65-72 (TPAGEGKT).

This sequence belongs to the formate--tetrahydrofolate ligase family.

The enzyme catalyses (6S)-5,6,7,8-tetrahydrofolate + formate + ATP = (6R)-10-formyltetrahydrofolate + ADP + phosphate. It participates in one-carbon metabolism; tetrahydrofolate interconversion. The chain is Formate--tetrahydrofolate ligase from Zymomonas mobilis subsp. mobilis (strain ATCC 31821 / ZM4 / CP4).